A 266-amino-acid polypeptide reads, in one-letter code: Imidazole glycerol phosphate synthase subunit HisF (266 aa).

Active-site residues include aspartate 11 and aspartate 130. Residues 134–157 (RTPEEAARPGPDGAPRGEGWDVYS) form a disordered region.

Belongs to the HisA/HisF family. As to quaternary structure, heterodimer of HisH and HisF.

It localises to the cytoplasm. The catalysed reaction is 5-[(5-phospho-1-deoxy-D-ribulos-1-ylimino)methylamino]-1-(5-phospho-beta-D-ribosyl)imidazole-4-carboxamide + L-glutamine = D-erythro-1-(imidazol-4-yl)glycerol 3-phosphate + 5-amino-1-(5-phospho-beta-D-ribosyl)imidazole-4-carboxamide + L-glutamate + H(+). It participates in amino-acid biosynthesis; L-histidine biosynthesis; L-histidine from 5-phospho-alpha-D-ribose 1-diphosphate: step 5/9. IGPS catalyzes the conversion of PRFAR and glutamine to IGP, AICAR and glutamate. The HisF subunit catalyzes the cyclization activity that produces IGP and AICAR from PRFAR using the ammonia provided by the HisH subunit. The protein is Imidazole glycerol phosphate synthase subunit HisF of Paracidovorax citrulli (strain AAC00-1) (Acidovorax citrulli).